We begin with the raw amino-acid sequence, 186 residues long: Ribosome-recycling factor (186 aa).

This sequence belongs to the RRF family.

Its subcellular location is the cytoplasm. Functionally, responsible for the release of ribosomes from messenger RNA at the termination of protein biosynthesis. May increase the efficiency of translation by recycling ribosomes from one round of translation to another. This chain is Ribosome-recycling factor, found in Chlorobaculum parvum (strain DSM 263 / NCIMB 8327) (Chlorobium vibrioforme subsp. thiosulfatophilum).